The following is a 354-amino-acid chain: Uroporphyrinogen decarboxylase (354 aa).

Residues arginine 27–arginine 31, aspartate 77, tyrosine 154, threonine 209, and histidine 327 contribute to the substrate site.

This sequence belongs to the uroporphyrinogen decarboxylase family. Homodimer.

The protein resides in the cytoplasm. The catalysed reaction is uroporphyrinogen III + 4 H(+) = coproporphyrinogen III + 4 CO2. It functions in the pathway porphyrin-containing compound metabolism; protoporphyrin-IX biosynthesis; coproporphyrinogen-III from 5-aminolevulinate: step 4/4. Catalyzes the decarboxylation of four acetate groups of uroporphyrinogen-III to yield coproporphyrinogen-III. This chain is Uroporphyrinogen decarboxylase, found in Salmonella dublin (strain CT_02021853).